The sequence spans 260 residues: 1-(5-phosphoribosyl)-5-[(5-phosphoribosylamino)methylideneamino] imidazole-4-carboxamide isomerase (260 aa).

Aspartate 8 acts as the Proton acceptor in catalysis. The active-site Proton donor is aspartate 130.

The protein belongs to the HisA/HisF family.

It is found in the cytoplasm. The enzyme catalyses 1-(5-phospho-beta-D-ribosyl)-5-[(5-phospho-beta-D-ribosylamino)methylideneamino]imidazole-4-carboxamide = 5-[(5-phospho-1-deoxy-D-ribulos-1-ylimino)methylamino]-1-(5-phospho-beta-D-ribosyl)imidazole-4-carboxamide. It participates in amino-acid biosynthesis; L-histidine biosynthesis; L-histidine from 5-phospho-alpha-D-ribose 1-diphosphate: step 4/9. The chain is 1-(5-phosphoribosyl)-5-[(5-phosphoribosylamino)methylideneamino] imidazole-4-carboxamide isomerase from Chlorobaculum tepidum (strain ATCC 49652 / DSM 12025 / NBRC 103806 / TLS) (Chlorobium tepidum).